We begin with the raw amino-acid sequence, 236 residues long: Ribose-5-phosphate isomerase A 2 (236 aa).

Substrate-binding positions include 31-34 (SGTT), 86-89 (DGPD), and 99-102 (KGGG). The active-site Proton acceptor is the Glu-108. Position 126 (Lys-126) interacts with substrate.

It belongs to the ribose 5-phosphate isomerase family. In terms of assembly, homodimer.

The catalysed reaction is aldehydo-D-ribose 5-phosphate = D-ribulose 5-phosphate. Its pathway is carbohydrate degradation; pentose phosphate pathway; D-ribose 5-phosphate from D-ribulose 5-phosphate (non-oxidative stage): step 1/1. Its function is as follows. Catalyzes the reversible conversion of ribose-5-phosphate to ribulose 5-phosphate. This is Ribose-5-phosphate isomerase A 2 from Yersinia pestis.